Consider the following 193-residue polypeptide: MVATGSLSSKNTASISELLDGGSHPGSLLSDFDYWDYVVPEPNLNEVVFEETTCQNLVKMLENCLSKSKQTKLGCSKVLVPEKLTQRIAQDVLRLSSTEPCGLRGCVMHVNLEIENVCKKLDRIVCDASVVPTFELTLVFKQESCSWTSLKDFFFSGGRFSSGLRRTLILSSGFRLVKKKLYSLIGTTVIEEC.

Belongs to the DDIT4 family. In terms of tissue distribution, expressed in heart, skeletal muscle and testis.

It localises to the cytoplasm. Functionally, inhibits cell growth by regulating the TOR signaling pathway upstream of the TSC1-TSC2 complex and downstream of AKT1. In Rattus norvegicus (Rat), this protein is DNA damage-inducible transcript 4-like protein (Ddit4l).